Consider the following 383-residue polypeptide: MDGRTRMQIDFAHQPPSRVGIEWELACVDRGSGELAGVAPEILRSFPHDDAHPHVTGEFLTNTVEVVSAPHSRVGHAVDDLARLIERVVDVADPLGIDLMCAGTHPFSAWPDQDVTPDNERYATLLDRTRWWGRQMMIWGVHVHVGIDDASKALPILNALLVHLPRFQALSASSPFWSGQETGYASNRALMFQQLPTAGLPPDLTTWADYERLVGDMTHVGVIDHHSELRWDIRPAPKWGTLETRVFDGVSTLGEIASLAALVQCLVHDMSAALDRGEELPRMQPWFVRENKWRAARYGMDAIIIQDAAGDEALVGDDTRALVERLSPTADALGCEAELRGILDIVDRGASYQRQLRVAEENDGALAPVVTHLVEELRSGLGR.

It belongs to the glutamate--cysteine ligase type 2 family. YbdK subfamily.

It carries out the reaction L-cysteine + L-glutamate + ATP = gamma-L-glutamyl-L-cysteine + ADP + phosphate + H(+). ATP-dependent carboxylate-amine ligase which exhibits weak glutamate--cysteine ligase activity. This Clavibacter michiganensis subsp. michiganensis (strain NCPPB 382) protein is Putative glutamate--cysteine ligase 2.